Consider the following 406-residue polypeptide: Tyrosine-specific transport system 2 (406 aa).

The next 11 helical transmembrane spans lie at 7–27, 38–58, 83–103, 119–139, 150–170, 183–203, 219–239, 279–299, 314–334, 335–355, and 376–396; these read FGSALIIAGTTIGAGMLAMPL, LLLLVGLWALLVYSGLLFVEV, IFATLSLLVLLYALSAAYITG, AMSLKTAIIIFTVVLGSFVVV, VLFIGKLIAFAFVLFMMLPKV, AFVVSAAPIFLTSFGFHVIMA, AILIGTAIPLAAYLVWQLATH, VFSSLALITSFLGVMLGVFEG, FVLTIAAFLPPLVFALFYPEG, FITALSYAGLLCAFYCLILPI, and NFALVLALLIGVVIMLIPFLI.

Belongs to the amino acid/polyamine transporter 2 family. Mtr/TnaB/TyrP permease subfamily.

It localises to the cell inner membrane. The enzyme catalyses L-tyrosine(in) + H(+)(in) = L-tyrosine(out) + H(+)(out). Functionally, transports tyrosine across the cytoplasmic membrane. The transport system is energized by the proton motive force. This chain is Tyrosine-specific transport system 2 (tyrP-B), found in Haemophilus influenzae (strain ATCC 51907 / DSM 11121 / KW20 / Rd).